We begin with the raw amino-acid sequence, 516 residues long: Putative transposase y4bL/y4kJ/y4tB (516 aa).

An HTH IS408-type domain is found at 15 to 96 (IRTILRLTHE…PDWALVVREL (82 aa)). Residues 138–319 (FRNRHAAGAV…SRRELFEEIE (182 aa)) form the Integrase catalytic domain. A disordered region spans residues 493–516 (ERPQAEHAAPTPAHTNIRGRSYYQ).

This sequence belongs to the transposase IS21/IS408/IS1162 family.

The sequence is that of Putative transposase y4bL/y4kJ/y4tB from Sinorhizobium fredii (strain NBRC 101917 / NGR234).